The chain runs to 1475 residues: Alpha-glucan water dikinase, chloroplastic (1475 aa).

A chloroplast-targeting transit peptide spans 1-85 (MSNSIGRNVL…HRPVLITPRA (85 aa)). Histidine 1077 functions as the Tele-phosphohistidine intermediate in the catalytic mechanism.

Belongs to the PEP-utilizing enzyme family. As to quaternary structure, homodimer. The cofactor is Mg(2+).

It is found in the plastid. Its subcellular location is the chloroplast. The catalysed reaction is [(1-&gt;4)-alpha-D-glucosyl](n) + n ATP + n H2O = [(1-&gt;4)-6-phospho-alpha-D-glucosyl](n) + n AMP + n phosphate + 2n H(+). In terms of biological role, mediates the incorporation of phosphate into starch-like alpha-glucan, mostly at the C-6 position of glucose units. Acts as an overall regulator of starch mobilization. Required for starch degradation, suggesting that the phosphate content of starch regulates its degradability. This chain is Alpha-glucan water dikinase, chloroplastic (R1), found in Citrus reticulata (Tangerine).